A 553-amino-acid polypeptide reads, in one-letter code: CTP synthase (553 aa).

Residues 1 to 266 form an amidoligase domain region; the sequence is MKYIFVTGGV…GKAVEDLLGL (266 aa). Position 12 (Ser12) interacts with CTP. Residue Ser12 coordinates UTP. 13-18 is an ATP binding site; that stretch reads SLGKGV. Position 53 (Tyr53) interacts with L-glutamine. Asp70 contacts ATP. Mg(2+) is bound by residues Asp70 and Glu140. CTP contacts are provided by residues 147–149, 187–192, and Lys223; these read DIE and KTKPTQ. UTP-binding positions include 187-192 and Lys223; that span reads KTKPTQ. The 251-residue stretch at 291–541 folds into the Glutamine amidotransferase type-1 domain; sequence TIAIAGKYTE…VAAALQSGPS (251 aa). Residue Gly353 coordinates L-glutamine. Cys380 functions as the Nucleophile; for glutamine hydrolysis in the catalytic mechanism. L-glutamine contacts are provided by residues 381 to 384, Glu404, and Arg464; that span reads LGMQ. Active-site residues include His514 and Glu516.

It belongs to the CTP synthase family. Homotetramer.

It catalyses the reaction UTP + L-glutamine + ATP + H2O = CTP + L-glutamate + ADP + phosphate + 2 H(+). The catalysed reaction is L-glutamine + H2O = L-glutamate + NH4(+). It carries out the reaction UTP + NH4(+) + ATP = CTP + ADP + phosphate + 2 H(+). It functions in the pathway pyrimidine metabolism; CTP biosynthesis via de novo pathway; CTP from UDP: step 2/2. With respect to regulation, allosterically activated by GTP, when glutamine is the substrate; GTP has no effect on the reaction when ammonia is the substrate. The allosteric effector GTP functions by stabilizing the protein conformation that binds the tetrahedral intermediate(s) formed during glutamine hydrolysis. Inhibited by the product CTP, via allosteric rather than competitive inhibition. Catalyzes the ATP-dependent amination of UTP to CTP with either L-glutamine or ammonia as the source of nitrogen. Regulates intracellular CTP levels through interactions with the four ribonucleotide triphosphates. This is CTP synthase from Deinococcus geothermalis (strain DSM 11300 / CIP 105573 / AG-3a).